Reading from the N-terminus, the 670-residue chain is MEVPAKIQKRIERLRHEINDHNYRYYVLSQPTIPDSVYDELFHELEKLEKKYPETITPSSPTQRVGAEPLKVFEPVHHEIPMLSLDNVFDEKGLRAFDKRIRQRLKLDKPFEYVCEPKMDGVALSLLYENGELIRAATRGDGYTGENVTQNTRTIASVPLQLRGNDYPELVEIRGEVLMPREGFAKFNREAEKRGDKTFANPRNAASGSLRQLDPRITAKRPLIFYGYLIGLLKGKDFPKNHCDVLKWFKDWGIPVISEIKVVGGIEGCLDYYEHLVKTREKMPFDIDGIVIKVNSLQVQAELGFVSRAPRWAIAYKFPAQEKMTVVKAIEFQVGRTGAVTPVARLEPVSVSGVTVSNATLHNFDELYRKDVRVGDTVIVRRAGDVIPEVVGPILAKRPKKAKLIKIPSRCPVCHAEVIKPEGEAVARCVGGLYCRAQLRESIKHFSSRRALDIEGLGDKLVELFIQEKLIKDITGIYQLKKSAITALPRMGEKSAENLLTAIEKSKKTTLPRFLYALGIRGVGDTTARTLARHFHELDLLMKASIETLQEIRDIGPVAAENIHAFFHQKNNAELINKLIHLGVHWPQEKAVVKSEIAGKTFVLTGALKSLTREEAEEKIERSGGKATSSVSKNTDYVIVGENPGSKYEKAKALGISLIDEEAFLKLLKS.

NAD(+) is bound by residues 35–39, 84–85, and E116; these read DSVYD and SL. K118 (N6-AMP-lysine intermediate) is an active-site residue. Positions 139, 176, 293, and 317 each coordinate NAD(+). Zn(2+)-binding residues include C411, C414, C429, and C435. A BRCT domain is found at 592 to 670; sequence VVKSEIAGKT…EEAFLKLLKS (79 aa).

This sequence belongs to the NAD-dependent DNA ligase family. LigA subfamily. Mg(2+) serves as cofactor. The cofactor is Mn(2+).

It catalyses the reaction NAD(+) + (deoxyribonucleotide)n-3'-hydroxyl + 5'-phospho-(deoxyribonucleotide)m = (deoxyribonucleotide)n+m + AMP + beta-nicotinamide D-nucleotide.. In terms of biological role, DNA ligase that catalyzes the formation of phosphodiester linkages between 5'-phosphoryl and 3'-hydroxyl groups in double-stranded DNA using NAD as a coenzyme and as the energy source for the reaction. It is essential for DNA replication and repair of damaged DNA. The chain is DNA ligase from Coxiella burnetii (strain RSA 331 / Henzerling II).